We begin with the raw amino-acid sequence, 168 residues long: Putative B3 domain-containing protein Os10g0158600 (168 aa).

The segment at residues 4–97 is a DNA-binding region (TF-B3); sequence VVFASARLNA…KARVMLLNRQ (94 aa). The interval 105–151 is disordered; sequence KTPSTTSSDKNRSLSPSDQLTRASTSAHPSTSKSIPPLRNGTGSTKR. Over residues 106-138 the composition is skewed to polar residues; it reads TPSTTSSDKNRSLSPSDQLTRASTSAHPSTSKS.

It is found in the nucleus. The chain is Putative B3 domain-containing protein Os10g0158600 from Oryza sativa subsp. japonica (Rice).